The following is a 190-amino-acid chain: dCTP deaminase, dUMP-forming (190 aa).

DCTP-binding positions include 101 to 106 (KSSLGR), aspartate 119, 127 to 129 (TLE), glutamine 148, tyrosine 162, and glutamine 174. Glutamate 129 serves as the catalytic Proton donor/acceptor. A disordered region spans residues 161 to 190 (PYGSSGVGSKYQGQRGPTPSRSYQNFIRST). Residues 171–190 (YQGQRGPTPSRSYQNFIRST) are compositionally biased toward polar residues.

Belongs to the dCTP deaminase family. Homotrimer.

It catalyses the reaction dCTP + 2 H2O = dUMP + NH4(+) + diphosphate. It functions in the pathway pyrimidine metabolism; dUMP biosynthesis; dUMP from dCTP: step 1/1. In terms of biological role, bifunctional enzyme that catalyzes both the deamination of dCTP to dUTP and the hydrolysis of dUTP to dUMP without releasing the toxic dUTP intermediate. This chain is dCTP deaminase, dUMP-forming, found in Mycobacterium ulcerans (strain Agy99).